Consider the following 95-residue polypeptide: Small ribosomal subunit protein bS18 (95 aa).

The protein belongs to the bacterial ribosomal protein bS18 family. In terms of assembly, part of the 30S ribosomal subunit. Forms a tight heterodimer with protein bS6.

Functionally, binds as a heterodimer with protein bS6 to the central domain of the 16S rRNA, where it helps stabilize the platform of the 30S subunit. The chain is Small ribosomal subunit protein bS18 from Ehrlichia ruminantium (strain Gardel).